The chain runs to 541 residues: Chaperonin GroEL (541 aa).

Residues 29 to 32 (TIGP), 86 to 90 (DGTTT), glycine 413, 478 to 480 (NAA), and aspartate 494 each bind ATP.

The protein belongs to the chaperonin (HSP60) family. As to quaternary structure, forms a cylinder of 14 subunits composed of two heptameric rings stacked back-to-back. Interacts with the co-chaperonin GroES.

The protein localises to the cytoplasm. It catalyses the reaction ATP + H2O + a folded polypeptide = ADP + phosphate + an unfolded polypeptide.. In terms of biological role, together with its co-chaperonin GroES, plays an essential role in assisting protein folding. The GroEL-GroES system forms a nano-cage that allows encapsulation of the non-native substrate proteins and provides a physical environment optimized to promote and accelerate protein folding. This Oenococcus oeni (strain ATCC BAA-331 / PSU-1) protein is Chaperonin GroEL.